The following is an 87-amino-acid chain: Down syndrome critical region protein 10 (87 aa).

In terms of tissue distribution, expressed in placenta and testis.

The polypeptide is Down syndrome critical region protein 10 (DSCR10) (Homo sapiens (Human)).